The primary structure comprises 301 residues: uncharacterized protein (301 aa).

The 242-residue stretch at K45–L286 folds into the Radical SAM core domain.

This is an uncharacterized protein from Acidianus two-tailed virus (ATV).